The following is a 343-amino-acid chain: 3-isopropylmalate dehydrogenase (343 aa).

Substrate-binding residues include Arg-94, Arg-104, Arg-128, and Asp-218. Mg(2+)-binding residues include Asp-218, Asp-242, and Asp-246. 278 to 290 (GSAPDIAGQNKAN) contacts NAD(+).

This sequence belongs to the isocitrate and isopropylmalate dehydrogenases family. LeuB type 2 subfamily. As to quaternary structure, homodimer. Mg(2+) serves as cofactor. It depends on Mn(2+) as a cofactor.

Its subcellular location is the cytoplasm. It carries out the reaction (2R,3S)-3-isopropylmalate + NAD(+) = 4-methyl-2-oxopentanoate + CO2 + NADH. The protein operates within amino-acid biosynthesis; L-leucine biosynthesis; L-leucine from 3-methyl-2-oxobutanoate: step 3/4. In terms of biological role, catalyzes the oxidation of 3-carboxy-2-hydroxy-4-methylpentanoate (3-isopropylmalate) to 3-carboxy-4-methyl-2-oxopentanoate. The product decarboxylates to 4-methyl-2 oxopentanoate. In Bifidobacterium longum subsp. infantis (strain ATCC 15697 / DSM 20088 / JCM 1222 / NCTC 11817 / S12), this protein is 3-isopropylmalate dehydrogenase.